A 231-amino-acid polypeptide reads, in one-letter code: uncharacterized protein (231 aa).

A helical transmembrane segment spans residues 10–30 (SQNIFFIAIVIFILSSVILYH).

The protein localises to the membrane. This is an uncharacterized protein from Rickettsia prowazekii (strain Madrid E).